We begin with the raw amino-acid sequence, 373 residues long: tRNA-specific 2-thiouridylase MnmA (373 aa).

Residues 12–19 (GMSGGVDS) and M38 contribute to the ATP site. An interaction with target base in tRNA region spans residues 98–100 (NPD). Catalysis depends on C103, which acts as the Nucleophile. A disulfide bridge connects residues C103 and C200. G127 lines the ATP pocket. The segment at 150–152 (KDQ) is interaction with tRNA. Residue C200 is the Cysteine persulfide intermediate of the active site. The tract at residues 312–313 (RY) is interaction with tRNA.

It belongs to the MnmA/TRMU family.

The protein localises to the cytoplasm. The enzyme catalyses S-sulfanyl-L-cysteinyl-[protein] + uridine(34) in tRNA + AH2 + ATP = 2-thiouridine(34) in tRNA + L-cysteinyl-[protein] + A + AMP + diphosphate + H(+). Its function is as follows. Catalyzes the 2-thiolation of uridine at the wobble position (U34) of tRNA, leading to the formation of s(2)U34. In Streptococcus sanguinis (strain SK36), this protein is tRNA-specific 2-thiouridylase MnmA.